A 603-amino-acid chain; its full sequence is Keratin, type II cuticular Hb4 (603 aa).

The segment at 1–173 (MSCRSYRVSS…PNAQRVKRDE (173 aa)) is head. Residues 173-484 (EKEQIKTLNN…RLLEGEEIRI (312 aa)) form the IF rod domain. Residues 174 to 208 (KEQIKTLNNKFASFIDKVRFLEQQNKLLETKWSFL) form a coil 1A region. Residues 209–218 (QEQKCARSNL) form a linker 1 region. The coil 1B stretch occupies residues 219–319 (EPLFDNYITN…YHEEIEMLQS (101 aa)). Residues 320–336 (HISETSVIVKMDNSRDL) form a linker 12 region. The coil 2 stretch occupies residues 337–480 (NLDGIIAEVK…VTYRRLLEGE (144 aa)). A tail region spans residues 481–603 (EIRICEGVGP…STTTSRRTRY (123 aa)). The interval 579–603 (CSGGRGNRSSSVRFSSTTTSRRTRY) is disordered.

This sequence belongs to the intermediate filament family. As to quaternary structure, heterotetramer of two type I and two type II keratins. As to expression, in skin, only expressed in the suprabasal cells of tail scale epidermis. Suprabasally expressed in stratified squamous epithelia and also in the posterior unit of the complex filiform papillae of tongue. Expressed in rare anatomical sites in which an orthokeratinized stratum corneum would be too soft and a hard keratinized structure would be too rigid to meet the functional requirement of the respective epithelia.

The polypeptide is Keratin, type II cuticular Hb4 (Krt84) (Mus musculus (Mouse)).